The chain runs to 493 residues: Exosome complex component Rrp41 (493 aa).

2 disordered regions span residues 244-264 (VSEETAPEKGAEKEVLEPSPV) and 291-493 (LASE…EKDE). Over residues 249–259 (APEKGAEKEVL) the composition is skewed to basic and acidic residues. Positions 297 to 377 (PDFEDELEEE…ALEEETELEA (81 aa)) are enriched in acidic residues. Basic and acidic residues predominate over residues 383-400 (PELKEFDEIEARLEKEDA). The segment covering 401-471 (SIEAEEEIEP…EAEEEPEEEK (71 aa)) has biased composition (acidic residues). A compositionally biased stretch (basic and acidic residues) spans 472-493 (SEGPWKVVKDPSEAGTRGEKDE).

The protein belongs to the RNase PH family. Rrp41 subfamily. As to quaternary structure, component of the archaeal exosome complex. Forms a hexameric ring-like arrangement composed of 3 Rrp41-Rrp42 heterodimers. The hexameric ring associates with a trimer of Rrp4 and/or Csl4 subunits.

It localises to the cytoplasm. Catalytic component of the exosome, which is a complex involved in RNA degradation. Has 3'-&gt;5' exoribonuclease activity. Can also synthesize heteromeric RNA-tails. The polypeptide is Exosome complex component Rrp41 (Methanosarcina mazei (strain ATCC BAA-159 / DSM 3647 / Goe1 / Go1 / JCM 11833 / OCM 88) (Methanosarcina frisia)).